The chain runs to 99 residues: Antitoxin VapB47 (99 aa).

The protein belongs to the phD/YefM antitoxin family.

In terms of biological role, antitoxin component of a type II toxin-antitoxin (TA) system. This is Antitoxin VapB47 (vapB47) from Mycobacterium tuberculosis (strain CDC 1551 / Oshkosh).